The following is a 154-amino-acid chain: Myoglobin (154 aa).

Residues 2–148 enclose the Globin domain; it reads VLSDAEWHLV…FRKDIAAKYK (147 aa). S4 carries the post-translational modification Phosphoserine. H65 is a binding site for nitrite. H65 lines the O2 pocket. Position 68 is a phosphothreonine (T68). Residue H94 coordinates heme b.

This sequence belongs to the globin family. As to quaternary structure, monomeric.

The protein localises to the cytoplasm. It is found in the sarcoplasm. It catalyses the reaction Fe(III)-heme b-[protein] + nitric oxide + H2O = Fe(II)-heme b-[protein] + nitrite + 2 H(+). It carries out the reaction H2O2 + AH2 = A + 2 H2O. Monomeric heme protein which primary function is to store oxygen and facilitate its diffusion within muscle tissues. Reversibly binds oxygen through a pentacoordinated heme iron and enables its timely and efficient release as needed during periods of heightened demand. Depending on the oxidative conditions of tissues and cells, and in addition to its ability to bind oxygen, it also has a nitrite reductase activity whereby it regulates the production of bioactive nitric oxide. Under stress conditions, like hypoxia and anoxia, it also protects cells against reactive oxygen species thanks to its pseudoperoxidase activity. This is Myoglobin (MB) from Balaenoptera acutorostrata (Common minke whale).